The primary structure comprises 365 residues: Outer capsid protein sigma-3 (365 aa).

The CCHC-type zinc-finger motif lies at 51-73 (CMHCLGVVGSLQRKLKHLPHHRC).

This sequence belongs to the orthoreovirus sigma-3 protein family. Heterohexamer of three sigma-3 and three Mu-1 proteins. The RNA-binding form is probably a homodimer. Post-translationally, cleaved during virus the endosomal proteolytic disassembly of the outer capsid.

It is found in the virion. It localises to the host cytoplasm. Its subcellular location is the host nucleus. Stimulates translation by blocking the activation of the dsRNA-dependent protein kinase EIF2AK2/PKR, thereby inhibiting the host interferon response. Sigma3 prevents the activation of EIF2AK2 by competing with the kinase for dsRNA-binding. In terms of biological role, the viral outer shell polypeptides, of which sigma-3 is one, impose structural constraints that prevent elongation of nascent transcripts by the RNA-dependent RNA polymerase lambda-3. The sequence is that of Outer capsid protein sigma-3 (S4) from Reovirus type 3 (strain Dearing) (T3D).